Consider the following 594-residue polypeptide: Developmental and secondary metabolism regulator veA (594 aa).

The Velvet domain maps to 24-220 (GRRLFYRIDV…AEQGTRVRIR (197 aa)). The Nuclear localization signal signature appears at 38 to 43 (EKCRAC). Disordered stretches follow at residues 40–59 (CRAC…VDPP) and 210–558 (MAEQ…DVEE). Positions 217–229 (VRIRRDVRMRRRD) are enriched in basic residues. The span at 296 to 307 (APPPPNPPPPGF) shows a compositional bias: pro residues. Positions 327–351 (SHSQYQQPTSSSSSSEQVSSVPQSP) are enriched in low complexity. Residues 352–362 (AYSSHAAQQHY) are compositionally biased toward polar residues. A compositionally biased stretch (basic and acidic residues) spans 374-383 (PERRLSDHRS). The segment covering 384–403 (SQPNNHPQQSPHQHSYSHRS) has biased composition (low complexity). The segment covering 405–416 (PQRERFMPDSRR) has biased composition (basic and acidic residues). The tract at residues 457 to 506 (VADTQATPHLPPIRWPRPNMNLPSPPSEHQEALQPLQPAPLHYESQTHQQ) is PEST. Positions 523–538 (YSYGYSYSHNHSHGYG) are enriched in low complexity.

This sequence belongs to the velvet family. VeA subfamily. Component of the heterotrimeric velvet complex composed of LAEA, VEA and VELB; VEA acting as a bridging protein between LAEA and VELB.

It localises to the nucleus. Its subcellular location is the cytoplasm. Functionally, component of the velvet transcription factor complex that controls sexual/asexual developmental ratio in response to light, promoting sexual development in the darkness while stimulating asexual sporulation under illumination. The velvet complex acts as a global regulator for secondary metabolite gene expression. Regulates of the response to reactive oxygen species (ROS) stress. This chain is Developmental and secondary metabolism regulator veA, found in Pyricularia oryzae (strain 70-15 / ATCC MYA-4617 / FGSC 8958) (Rice blast fungus).